A 613-amino-acid chain; its full sequence is Ribosome-associated molecular chaperone SSB1 (613 aa).

Residues 1–391 (MAEGVFPGAI…ILTGQSTSDE (391 aa)) are nucleotide binding domain (NBD). ATP-binding positions include 16 to 18 (TTY), Lys73, 205 to 207 (GGT), 271 to 278 (ERAKRTLS), and Gly342. Positions 392-402 (TKDLLLLDVAP) are inter-domain linker. Residues 403-613 (LSLGVGMAGD…RAVTKAMSTR (211 aa)) form a substrate binding domain (SBD) region. The tract at residues 516–612 (SEEIEQMVNQ…KRAVTKAMST (97 aa)) is lid domain (SBDalpha). The Nuclear export signal signature appears at 574 to 582 (VEAALADAF).

The protein belongs to the heat shock protein 70 family. Ssb-type Hsp70 subfamily. In terms of assembly, binds to ribosomes. Binds close to the ribosomal tunnel exit via contacts with both ribosomal proteins and rRNA. Directly interacts with nascent polypeptides. This interaction is dependent on the ribosome-associated complex (RAC). Interacts with SSE1. Interacts with FES1.

The protein localises to the cytoplasm. It catalyses the reaction ATP + H2O = ADP + phosphate + H(+). In terms of biological role, ribosome-bound, Hsp70-type chaperone that assists in the cotranslational folding of newly synthesized proteins in the cytosol. Stimulates folding by interacting with nascent chains, binding to short, largely hydrophobic sequences exposed by unfolded proteins, thereby stabilizing longer, more slowly translated, and aggregation-prone nascent polypeptides and domains that cannot fold stably until fully synthesized. The Hsp70-protein substrate interaction depends on ATP-binding and on allosteric regulation between the NBD and the SBD. The ATP-bound state is characterized by a fast exchange rate of substrate (low affinity state), while in the ADP-bound state exchange is much slower (high affinity state). During the Hsp70 cycle, the chaperone switches between the ATP-bound state (open conformation) and the ADP-bound state (closed conformation) by major conformational rearrangements involving mainly the lid domain. Ssb cooperates with a specific Hsp40/Hsp70 co-chaperone termed the ribosome-associated complex (RAC), which stimulates the ATPase activity of the ribosome-associated pool of Ssbs and switches it to the high affinity substrate binding state. Hsp110 chaperone SSE1 and FES1 act as nucleotide exchange factors that cause substrate release. The chain is Ribosome-associated molecular chaperone SSB1 (SSB1) from Kluyveromyces marxianus (Yeast).